A 743-amino-acid chain; its full sequence is Phenylalanine ammonia-lyase 1 (743 aa).

Tyrosine 120 acts as the Proton donor/acceptor in catalysis. Positions 224 to 226 (ASG) form a cross-link, 5-imidazolinone (Ala-Gly). Serine 225 is modified (2,3-didehydroalanine (Ser)). Asparagine 287, glutamine 377, arginine 383, asparagine 413, lysine 484, glutamate 512, and asparagine 515 together coordinate (E)-cinnamate.

The protein belongs to the PAL/histidase family. As to quaternary structure, homotetramer. Post-translationally, contains an active site 4-methylidene-imidazol-5-one (MIO), which is formed autocatalytically by cyclization and dehydration of residues Ala-Ser-Gly.

The protein localises to the cytoplasm. It carries out the reaction L-phenylalanine = (E)-cinnamate + NH4(+). The protein operates within phenylpropanoid metabolism; trans-cinnamate biosynthesis; trans-cinnamate from L-phenylalanine: step 1/1. Catalyzes the non-oxidative deamination of L-phenylalanine to form trans-cinnamic acid and a free ammonium ion. Facilitates the commitment step in phenylpropanoid pathways that produce secondary metabolites such as lignins, coumarins and flavonoids. The protein is Phenylalanine ammonia-lyase 1 of Pleurotus ostreatus (Oyster mushroom).